The chain runs to 411 residues: Pre-mRNA-splicing factor dre4 (411 aa).

The WW 1 domain occupies 3 to 36 (QPLPPGWTEHKAPSGIPYYWNAELKKSTYQRPSF). The segment at 65–84 (NAEERKNSRDLRKQLPDRPK) is disordered. The segment covering 66 to 83 (AEERKNSRDLRKQLPDRP) has biased composition (basic and acidic residues). The region spanning 89-122 (IPNNDSWVVVFTKKNRYFFHNLKSHESYWEPPLE) is the WW 2 domain. A disordered region spans residues 138 to 209 (ISKDSSQSQN…KSHSAEELEF (72 aa)). Positions 140–151 (KDSSQSQNVDSG) are enriched in polar residues. Basic and acidic residues predominate over residues 152-166 (KTNHEEIHESRHLQT). Residues 167–179 (EIEEPSGLEESSE) are compositionally biased toward acidic residues. Positions 239–293 (TDDARRVFTELLKDKNIGAYQPWELVYPKLLDDDRFYVLDSGERRKEVFEEYCKS) constitute an FF domain.

As to quaternary structure, component of the spliceosomal complex. Interacts with prp19.

The protein resides in the nucleus. Component of the spliceosome involved in mRNA processing. This Schizosaccharomyces pombe (strain 972 / ATCC 24843) (Fission yeast) protein is Pre-mRNA-splicing factor dre4 (dre4).